A 123-amino-acid chain; its full sequence is Periplasmic [Fe] hydrogenase small subunit (123 aa).

The tat-type signal signal peptide spans 1–34 (MQIASITRRGFLKVACVTTGAALIGIRMTGKAVA). The disordered stretch occupies residues 103-123 (TTAGKLPNPRASEFEGPYPYE).

In terms of assembly, heterodimer of a large and a small subunit. Predicted to be exported by the Tat system. The position of the signal peptide cleavage has been experimentally proven.

The protein localises to the periplasm. The enzyme catalyses H2 + 2 oxidized [2Fe-2S]-[ferredoxin] = 2 reduced [2Fe-2S]-[ferredoxin] + 2 H(+). May be involved in hydrogen uptake for the reduction of sulfate to hydrogen sulfide in an electron transport chain. Cytochrome c3 is likely to be the physiological electron carrier for the enzyme. The protein is Periplasmic [Fe] hydrogenase small subunit (hydB) of Nitratidesulfovibrio vulgaris (strain ATCC 29579 / DSM 644 / CCUG 34227 / NCIMB 8303 / VKM B-1760 / Hildenborough) (Desulfovibrio vulgaris).